A 184-amino-acid chain; its full sequence is Autophagy-related protein 101 (184 aa).

Belongs to the ATG101 family. In terms of assembly, component of the atg1 kinase complex composed of at least atg1, atg13, atg17 and atg101. Interacts directly with atg13.

It localises to the cytoplasm. The protein resides in the nucleus. The protein localises to the preautophagosomal structure membrane. Functionally, autophagy factor required for autophagosome formation. Component of the atg1 kinase complex in which it stabilizes atg13. Is also responsible for recruiting downstream factors to the autophagosome-formation site. Has a role in meiosis and sporulation. This Schizosaccharomyces pombe (strain 972 / ATCC 24843) (Fission yeast) protein is Autophagy-related protein 101.